The sequence spans 104 residues: Interferon alpha-inducible protein 27-like protein 1 (104 aa).

3 consecutive transmembrane segments (helical) span residues 14 to 34, 59 to 79, and 81 to 101; these read VAAVVGGVVAVGTVLVALSAM, GGGVAAGSLVAILQSVGAAGL, and VTSKVIGGFAGTALGAWLGSP.

This sequence belongs to the IFI6/IFI27 family.

The protein localises to the membrane. Its function is as follows. Plays a role in the apoptotic process and has a pro-apoptotic activity. The protein is Interferon alpha-inducible protein 27-like protein 1 of Homo sapiens (Human).